Consider the following 152-residue polypeptide: Flagellar assembly factor FliW (152 aa).

It belongs to the FliW family. In terms of assembly, interacts with translational regulator CsrA and flagellin(s).

The protein localises to the cytoplasm. Its function is as follows. Acts as an anti-CsrA protein, binds CsrA and prevents it from repressing translation of its target genes, one of which is flagellin. Binds to flagellin and participates in the assembly of the flagellum. The chain is Flagellar assembly factor FliW from Desulfitobacterium hafniense (strain Y51).